Consider the following 1206-residue polypeptide: DNA-directed RNA polymerase subunit beta' (1206 aa).

Residues Cys60, Cys62, Cys75, and Cys78 each coordinate Zn(2+). 3 residues coordinate Mg(2+): Asp449, Asp451, and Asp453. Cys822, Cys896, Cys903, and Cys906 together coordinate Zn(2+).

Belongs to the RNA polymerase beta' chain family. The RNAP catalytic core consists of 2 alpha, 1 beta, 1 beta' and 1 omega subunit. When a sigma factor is associated with the core the holoenzyme is formed, which can initiate transcription. Mg(2+) serves as cofactor. The cofactor is Zn(2+).

The catalysed reaction is RNA(n) + a ribonucleoside 5'-triphosphate = RNA(n+1) + diphosphate. In terms of biological role, DNA-dependent RNA polymerase catalyzes the transcription of DNA into RNA using the four ribonucleoside triphosphates as substrates. The chain is DNA-directed RNA polymerase subunit beta' from Staphylococcus haemolyticus (strain JCSC1435).